A 310-amino-acid chain; its full sequence is tRNA uridine(34) hydroxylase (310 aa).

The 95-residue stretch at 124 to 218 (SDPEVLLIDT…YFEEVPQEES (95 aa)) folds into the Rhodanese domain. Cys178 functions as the Cysteine persulfide intermediate in the catalytic mechanism.

The protein belongs to the TrhO family.

It carries out the reaction uridine(34) in tRNA + AH2 + O2 = 5-hydroxyuridine(34) in tRNA + A + H2O. In terms of biological role, catalyzes oxygen-dependent 5-hydroxyuridine (ho5U) modification at position 34 in tRNAs. This is tRNA uridine(34) hydroxylase from Pseudomonas putida (strain W619).